The primary structure comprises 152 residues: Large ribosomal subunit protein bL9 (152 aa).

This sequence belongs to the bacterial ribosomal protein bL9 family.

Binds to the 23S rRNA. In Synechococcus sp. (strain CC9902), this protein is Large ribosomal subunit protein bL9.